Reading from the N-terminus, the 339-residue chain is DNA-directed RNA polymerase subunit alpha (339 aa).

The tract at residues 1-233 (MVREEVAGST…DLFLPFLHAE (233 aa)) is alpha N-terminal domain (alpha-NTD). Positions 264–339 (KKGIPLNCIF…IDLLKNKLSF (76 aa)) are alpha C-terminal domain (alpha-CTD).

This sequence belongs to the RNA polymerase alpha chain family. In plastids the minimal PEP RNA polymerase catalytic core is composed of four subunits: alpha, beta, beta', and beta''. When a (nuclear-encoded) sigma factor is associated with the core the holoenzyme is formed, which can initiate transcription.

The protein localises to the plastid. It localises to the chloroplast. It carries out the reaction RNA(n) + a ribonucleoside 5'-triphosphate = RNA(n+1) + diphosphate. Its function is as follows. DNA-dependent RNA polymerase catalyzes the transcription of DNA into RNA using the four ribonucleoside triphosphates as substrates. The polypeptide is DNA-directed RNA polymerase subunit alpha (Agropyron cristatum (Crested wheatgrass)).